Reading from the N-terminus, the 305-residue chain is tRNA dimethylallyltransferase (305 aa).

Residue 8-15 (GPTAVGKT) participates in ATP binding. 10–15 (TAVGKT) is a substrate binding site. Residues 33-36 (DSRQ) form an interaction with substrate tRNA region.

The protein belongs to the IPP transferase family. Monomer. Mg(2+) serves as cofactor.

It catalyses the reaction adenosine(37) in tRNA + dimethylallyl diphosphate = N(6)-dimethylallyladenosine(37) in tRNA + diphosphate. Its function is as follows. Catalyzes the transfer of a dimethylallyl group onto the adenine at position 37 in tRNAs that read codons beginning with uridine, leading to the formation of N6-(dimethylallyl)adenosine (i(6)A). This is tRNA dimethylallyltransferase from Thermotoga sp. (strain RQ2).